We begin with the raw amino-acid sequence, 264 residues long: Short chain dehydrogenase CPUR_05429 (264 aa).

Residues Ile-24, Asp-70, Asn-97, and Arg-130 each contribute to the NADP(+) site. Catalysis depends on proton donor residues Ser-146 and Ser-147. Positions 161, 165, and 196 each coordinate NADP(+). The active-site Proton acceptor is Tyr-161. Residue Lys-165 is the Lowers pKa of active site Tyr of the active site.

It belongs to the short-chain dehydrogenases/reductases (SDR) family.

Its pathway is pigment biosynthesis. In terms of biological role, short chain dehydrogenase; part of the ergochrome gene cluster responsible for the typical purple-black color of the ergot sclerotia. The ergochrome gene cluster produces several ergot pigments including the yellow ergochrome secalonic acid and its derivatives, as well as the red anthraquinones endocrocin and clavorubin. The pathway begins with the synthesis of atrochrysone thioester by the polyketide synthase (PKS) CPUR_05437. The atrochrysone carboxyl ACP thioesterase CPUR_05436 then breaks the thioester bond and releases the atrochrysone carboxylic acid from CPUR_05437. The atrochrysone carboxylic acid is then converted to atrochrysone which is further transformed into emodin anthrone. The next step is performed by the anthrone oxygenase CPUR_05434 that catalyzes the oxidation of emodinanthrone to emodin. Emodin is further modified to yield monodictyphenone via several steps involving CPUR_05427, CPUR_05428, CPUR_05429 and CPUR_05430. The short chain dehydrogenase/reductase CPUR_05418 then catalyzes the C-5 ketoreduction to give the xanthone skeleton of the monomeric units. Ergochromes formation requires further dimerization steps of different xanthone units, probably catalyzed by the cytochrome P450 monooxygenase CPUR_05419. CPUR_05425, CPUR_05426 and CPUR_05431 are unique to Claviceps, thus it is likely that they are involved in further modification of xanthone units or in their dimerization. The yellow ergochromes and the red anthraquinone pigments endocrocin and clavorubin are products from the same PKS derived precursors and the latter are likely shunt products in the pathway of xanthone biosynthesis. It is proposed that atrochrysone carboxylic acid released from the PKS CPUR_05437 can also be converted to endocrocin anthrone which is further oxidized into endocrocin by CPUR_05435. Endocrocin could be then modified to clavorubin, possibly by CPUR_05423 and CPUR_05431. Clavorubin is the principal anthraquinone metabolite produced by the cluster with a much higher yield compared to endocrocin. The polypeptide is Short chain dehydrogenase CPUR_05429 (Claviceps purpurea (strain 20.1) (Ergot fungus)).